We begin with the raw amino-acid sequence, 576 residues long: Arginine--tRNA ligase (576 aa).

The 'HIGH' region motif lies at 122 to 132; the sequence is PNVAKEMHVGH.

This sequence belongs to the class-I aminoacyl-tRNA synthetase family. As to quaternary structure, monomer.

Its subcellular location is the cytoplasm. The catalysed reaction is tRNA(Arg) + L-arginine + ATP = L-arginyl-tRNA(Arg) + AMP + diphosphate. This is Arginine--tRNA ligase from Pectobacterium carotovorum subsp. carotovorum (strain PC1).